The sequence spans 303 residues: E3 ubiquitin-protein ligase SINA-like 3 (303 aa).

The segment at 1–30 (MENITNNSERSLDRPKRQRPVSMENVGGTA) is disordered. An RING-type zinc finger spans residues 49–85 (CPICYHKLGAPIYQCDNGHIACSSCCKKVKYKCPYCS). The segment at 99–286 (IVEAVVVSCP…MSIPYYLLDE (188 aa)) is SBD. The SIAH-type zinc finger occupies 102 to 162 (AVVVSCPNAK…LYRHYHAEHK (61 aa)). Zn(2+) is bound by residues Cys-107, Cys-114, His-128, Cys-132, Cys-139, Cys-144, His-156, and His-161.

The protein belongs to the SINA (Seven in absentia) family.

The enzyme catalyses S-ubiquitinyl-[E2 ubiquitin-conjugating enzyme]-L-cysteine + [acceptor protein]-L-lysine = [E2 ubiquitin-conjugating enzyme]-L-cysteine + N(6)-ubiquitinyl-[acceptor protein]-L-lysine.. The protein operates within protein modification; protein ubiquitination. Functionally, E3 ubiquitin-protein ligase that mediates ubiquitination and subsequent proteasomal degradation of target proteins. E3 ubiquitin ligases accept ubiquitin from an E2 ubiquitin-conjugating enzyme in the form of a thioester and then directly transfers the ubiquitin to targeted substrates. It probably triggers the ubiquitin-mediated degradation of different substrates. The chain is E3 ubiquitin-protein ligase SINA-like 3 from Arabidopsis thaliana (Mouse-ear cress).